A 198-amino-acid chain; its full sequence is Elongation factor Ts (198 aa).

Residues 81-84 form an involved in Mg(2+) ion dislocation from EF-Tu region; the sequence is TDFV.

This sequence belongs to the EF-Ts family.

The protein resides in the cytoplasm. Associates with the EF-Tu.GDP complex and induces the exchange of GDP to GTP. It remains bound to the aminoacyl-tRNA.EF-Tu.GTP complex up to the GTP hydrolysis stage on the ribosome. The protein is Elongation factor Ts of Leptospira biflexa serovar Patoc (strain Patoc 1 / Ames).